We begin with the raw amino-acid sequence, 473 residues long: Allene oxide synthase CYP74A2 (473 aa).

Lys-88, His-119, and Lys-123 together coordinate heme b. The (13S)-hydroperoxy-(9Z,11E)-octadecadienoate site is built by Ser-199 and Lys-282. Heme b contacts are provided by Lys-424 and Cys-426.

It belongs to the cytochrome P450 family. It depends on heme b as a cofactor.

It catalyses the reaction (13S)-hydroperoxy-(9Z,11E,15Z)-octadecatrienoate = (9Z,13S,15Z)-12,13-epoxyoctadeca-9,11,15-trienoate + H2O. The catalysed reaction is (13S)-hydroperoxy-(9Z,11E)-octadecadienoate = (9Z,13S)-12,13-epoxyoctadeca-9,11-dienoate + H2O. It participates in lipid metabolism; oxylipin biosynthesis. Cytochrome P450 enzyme involved in the biosynthesis of oxylipin jasmonates, important phytohormones acting as growth regulators and signaling molecules for plant defense. Functions as an allene oxide synthase that converts hydroperoxy fatty acids to unstable allene epoxides. Catalyzes the dehydration of 13-HPOTE ((13S)-hydroperoxy-(9Z,11E,15Z)-octadecatrienoate). Also catalyzes the dehydration of 13-HPODE ((13S)-hydroperoxy-(9Z,11E)-octadecadienoate). The protein is Allene oxide synthase CYP74A2 of Parthenium argentatum (Guayule rubber plant).